The chain runs to 121 residues: Protein opa (121 aa).

It belongs to the opacity porin family.

The polypeptide is Protein opa (opa) (Haemophilus influenzae (strain ATCC 51907 / DSM 11121 / KW20 / Rd)).